We begin with the raw amino-acid sequence, 184 residues long: Probable chorismate pyruvate-lyase 1 (184 aa).

Substrate is bound by residues arginine 70, leucine 108, and glutamate 166.

Belongs to the UbiC family.

The protein resides in the cytoplasm. The catalysed reaction is chorismate = 4-hydroxybenzoate + pyruvate. It participates in cofactor biosynthesis; ubiquinone biosynthesis. Functionally, removes the pyruvyl group from chorismate, with concomitant aromatization of the ring, to provide 4-hydroxybenzoate (4HB) for the ubiquinone pathway. This Burkholderia pseudomallei (strain 1710b) protein is Probable chorismate pyruvate-lyase 1.